A 179-amino-acid polypeptide reads, in one-letter code: Ubiquitin-conjugating enzyme E2 C (179 aa).

The segment at 1–31 (MASQNVDPAAASSVASRKGQESGTSAARGSV) is disordered. A UBC core domain is found at 30 to 179 (SVGKRLQQEL…YQKQVREKEI (150 aa)). The active-site Glycyl thioester intermediate is the C114.

It belongs to the ubiquitin-conjugating enzyme family. As to quaternary structure, component of the APC/C complex. In terms of processing, autoubiquitinated by the APC/C complex, leading to its degradation by the proteasome.

The enzyme catalyses S-ubiquitinyl-[E1 ubiquitin-activating enzyme]-L-cysteine + [E2 ubiquitin-conjugating enzyme]-L-cysteine = [E1 ubiquitin-activating enzyme]-L-cysteine + S-ubiquitinyl-[E2 ubiquitin-conjugating enzyme]-L-cysteine.. It carries out the reaction S-ubiquitinyl-[E1 ubiquitin-activating enzyme]-L-cysteine + [acceptor protein]-L-lysine = [E1 ubiquitin-activating enzyme]-L-cysteine + N(6)-monoubiquitinyl-[acceptor protein]-L-lysine.. Its pathway is protein modification; protein ubiquitination. Functionally, catalyzes the covalent attachment of ubiquitin to other proteins. Acts as an essential factor of the anaphase promoting complex/cyclosome (APC/C), a cell cycle-regulated ubiquitin ligase that controls progression through mitosis. Acts by initiating 'Lys-11'-linked polyubiquitin chains on APC/C substrates, leading to the degradation of APC/C substrates by the proteasome and promoting mitotic exit. This is Ubiquitin-conjugating enzyme E2 C (ube2c) from Xenopus laevis (African clawed frog).